The chain runs to 129 residues: Phosphoribosyl-AMP cyclohydrolase (129 aa).

Asp-79 provides a ligand contact to Mg(2+). Residue Cys-80 participates in Zn(2+) binding. 2 residues coordinate Mg(2+): Asp-81 and Asp-83. The Zn(2+) site is built by Cys-96 and Cys-103.

This sequence belongs to the PRA-CH family. Homodimer. It depends on Mg(2+) as a cofactor. The cofactor is Zn(2+).

Its subcellular location is the cytoplasm. The enzyme catalyses 1-(5-phospho-beta-D-ribosyl)-5'-AMP + H2O = 1-(5-phospho-beta-D-ribosyl)-5-[(5-phospho-beta-D-ribosylamino)methylideneamino]imidazole-4-carboxamide. Its pathway is amino-acid biosynthesis; L-histidine biosynthesis; L-histidine from 5-phospho-alpha-D-ribose 1-diphosphate: step 3/9. Its function is as follows. Catalyzes the hydrolysis of the adenine ring of phosphoribosyl-AMP. This Magnetococcus marinus (strain ATCC BAA-1437 / JCM 17883 / MC-1) protein is Phosphoribosyl-AMP cyclohydrolase.